The primary structure comprises 184 residues: Coordinator of PRMT5 and differentiation stimulator (184 aa).

N-acetylmethionine is present on methionine 1. Positions 1-14 (MDLQAAGAQAQGAA) are enriched in low complexity. A disordered region spans residues 1–136 (MDLQAAGAQA…PYDADDIQES (136 aa)). Positions 42 to 56 (SSQERETEKAMDRLA) are enriched in basic and acidic residues. Phosphoserine is present on residues serine 66 and serine 75. Acidic residues predominate over residues 78-89 (EGFAMDEEDSDG).

In terms of assembly, interacts with PRMT5. Interacts with histone H4; specifically interacts with the N-terminus of histone H4 but not with histone H3. Interacts with CBFB. Found in a complex with PRMT5, RUNX1 and CBFB.

The protein localises to the nucleus. Functionally, histone-binding protein required for histone H4 methyltransferase activity of PRMT5. Specifically required for histone H4 'Arg-3' methylation mediated by PRMT5, but not histone H3 'Arg-8' methylation, suggesting that it modulates the substrate specificity of PRMT5. Specifically interacts with the N-terminus of histone H4 but not with histone H3, suggesting that it acts by promoting the association between histone H4 and PRMT5. Involved in CCNE1 promoter repression. Plays a role in muscle cell differentiation by modulating the recruitment of PRMT5 to the promoter of genes involved in the coordination between cell cycle exit and muscle differentiation. The polypeptide is Coordinator of PRMT5 and differentiation stimulator (COPRS) (Homo sapiens (Human)).